Consider the following 162-residue polypeptide: Cytochrome c-type biogenesis protein CcmE (162 aa).

Topologically, residues 1–7 (MTRKQRR) are cytoplasmic. A helical; Signal-anchor for type II membrane protein transmembrane segment spans residues 8–28 (LTMIGGSLVVLAIAAALVLNA). At 29–162 (LRDSIVFFST…EASGKQGVSQ (134 aa)) the chain is on the periplasmic side. Residues His122 and Tyr126 each coordinate heme. A disordered region spans residues 138-162 (QGHWKDDYGPQAGAVEASGKQGVSQ).

It belongs to the CcmE/CycJ family.

It is found in the cell inner membrane. Functionally, heme chaperone required for the biogenesis of c-type cytochromes. Transiently binds heme delivered by CcmC and transfers the heme to apo-cytochromes in a process facilitated by CcmF and CcmH. In Nitrobacter hamburgensis (strain DSM 10229 / NCIMB 13809 / X14), this protein is Cytochrome c-type biogenesis protein CcmE.